Consider the following 186-residue polypeptide: Ribonuclease M5 (186 aa).

One can recognise a Toprim domain in the interval Ser-6–Pro-89. Mg(2+)-binding residues include Glu-12, Asp-58, and Asp-60.

This sequence belongs to the ribonuclease M5 family. It depends on Mg(2+) as a cofactor.

The protein resides in the cytoplasm. It catalyses the reaction Endonucleolytic cleavage of RNA, removing 21 and 42 nucleotides, respectively, from the 5'- and 3'-termini of a 5S-rRNA precursor.. In terms of biological role, required for correct processing of both the 5' and 3' ends of 5S rRNA precursor. Cleaves both sides of a double-stranded region yielding mature 5S rRNA in one step. The chain is Ribonuclease M5 from Streptococcus pneumoniae (strain ATCC BAA-255 / R6).